A 255-amino-acid polypeptide reads, in one-letter code: Ribonuclease HII (255 aa).

One can recognise an RNase H type-2 domain in the interval 58–247 (RYIAGIDEAG…VKSMVLGARY (190 aa)). A divalent metal cation-binding residues include aspartate 64, glutamate 65, and aspartate 156.

This sequence belongs to the RNase HII family. Mn(2+) serves as cofactor. It depends on Mg(2+) as a cofactor.

Its subcellular location is the cytoplasm. The catalysed reaction is Endonucleolytic cleavage to 5'-phosphomonoester.. In terms of biological role, endonuclease that specifically degrades the RNA of RNA-DNA hybrids. In Syntrophomonas wolfei subsp. wolfei (strain DSM 2245B / Goettingen), this protein is Ribonuclease HII.